A 266-amino-acid polypeptide reads, in one-letter code: Respiratory nitrate reductase beta chain (266 aa).

4Fe-4S ferredoxin-type domains lie at 3-32 (VGMV…AWFN) and 30-61 (WFNN…KREE). Residues C12, C15, C18, C22, C39, C42, and C47 each contribute to the [4Fe-4S] cluster site. The [3Fe-4S] cluster site is built by C51 and C73. [4Fe-4S] cluster contacts are provided by C77, C81, C84, C96, and C100.

Heterotrimer composed of an alpha, a beta and a gamma chain. Alpha and beta are catalytic chains; gamma chains are involved in binding the enzyme complex to the cytoplasmic membrane. Requires [4Fe-4S] cluster as cofactor. [3Fe-4S] cluster is required as a cofactor.

It is found in the cell membrane. The protein resides in the cytoplasm. It carries out the reaction nitrate + a quinol = a quinone + nitrite + H2O. Inhibited by micromolar concentrations of azide. Functionally, the nitrate reductase enzyme complex allows Bradyrhizobium sp. USDA 3045 to use nitrate as an electron acceptor during anaerobic growth. The beta chain is an electron transfer unit containing four cysteine clusters involved in the formation of iron-sulfur centers. Electrons are transferred from the gamma chain to the molybdenum cofactor of the alpha subunit. The sequence is that of Respiratory nitrate reductase beta chain (narH) from Bradyrhizobium sp.